The following is a 574-amino-acid chain: E3 ubiquitin-protein ligase TRIM23 (574 aa).

The RING-type; degenerate zinc-finger motif lies at 31–76 (CGVCEDVFSLQGDKVPRLLLCGHTVCHDCLTRLPLHGRAIRCPFDR). The segment at 122–168 (ESIIRCDEDEAHLASVYCTVCATHLCSECSQVTHSTKTLAKHRRVPL) adopts a B box-type; degenerate zinc-finger fold. Positions 352 to 379 (RVVLAKQEITRLLETLQKQQQQFTEVAD) form a coiled coil. The tract at residues 390–574 (TFTKDNRVHI…LVAAGVLDVA (185 aa)) is ARF-like. GTP is bound by residues 411–418 (GLDGAGKT), 454–458 (DVGGK), and 513–516 (NKQD).

In the C-terminal section; belongs to the small GTPase superfamily. Arf family. As to quaternary structure, homodimer. Interacts with PSCD1. Interacts with UBE2D2. Interacts with TBK1 (via N-terminal kinase domain) and p62/SQSTM1. In terms of assembly, (Microbial infection) Interacts with human cytomegalovirus protein UL144; this interaction might cause autoubiquitination of TRAF6, leading to NF-kappa-B activation.

It is found in the cytoplasm. Its subcellular location is the endomembrane system. The protein localises to the golgi apparatus membrane. The protein resides in the lysosome membrane. It catalyses the reaction S-ubiquitinyl-[E2 ubiquitin-conjugating enzyme]-L-cysteine + [acceptor protein]-L-lysine = [E2 ubiquitin-conjugating enzyme]-L-cysteine + N(6)-ubiquitinyl-[acceptor protein]-L-lysine.. It participates in protein modification; protein ubiquitination. In terms of biological role, acts as an E3 ubiquitin-protein ligase. Plays an essential role in autophagy activation during viral infection. Mechanistically, activates TANK-binding kinase 1/TBK1 by facilitating its dimerization and ability to phosphorylate the selective autophagy receptor SQSTM1. In order to achieve this function, TRIM23 mediates 'Lys-27'-linked auto-ubiquitination of its ADP-ribosylation factor (ARF) domain to induce its GTPase activity and its recruitment to autophagosomes. (Microbial infection) Mediates TRAF6 auto-ubiquitination in the presence of human cytomegalovirus protein UL144, resulting in the virally controlled activation of NF-kappa-B stimulation at early times of HCMV infection. This Homo sapiens (Human) protein is E3 ubiquitin-protein ligase TRIM23 (TRIM23).